The primary structure comprises 98 residues: Large ribosomal subunit protein uL23 (98 aa).

The protein belongs to the universal ribosomal protein uL23 family. Part of the 50S ribosomal subunit. Contacts protein L29, and trigger factor when it is bound to the ribosome.

In terms of biological role, one of the early assembly proteins it binds 23S rRNA. One of the proteins that surrounds the polypeptide exit tunnel on the outside of the ribosome. Forms the main docking site for trigger factor binding to the ribosome. The chain is Large ribosomal subunit protein uL23 from Cereibacter sphaeroides (strain ATCC 17029 / ATH 2.4.9) (Rhodobacter sphaeroides).